An 895-amino-acid polypeptide reads, in one-letter code: Protein translocase subunit SecA (895 aa).

ATP is bound by residues Q89, 107-111 (GEGKT), and D502. Disordered regions lie at residues 560-579 (RRID…PGRT) and 848-884 (AAPA…CGSG). 4 residues coordinate Zn(2+): C879, C881, C890, and H891.

The protein belongs to the SecA family. In terms of assembly, monomer and homodimer. Part of the essential Sec protein translocation apparatus which comprises SecA, SecYEG and auxiliary proteins SecDF-YajC and YidC. Requires Zn(2+) as cofactor.

It is found in the cell inner membrane. Its subcellular location is the cytoplasm. The enzyme catalyses ATP + H2O + cellular proteinSide 1 = ADP + phosphate + cellular proteinSide 2.. In terms of biological role, part of the Sec protein translocase complex. Interacts with the SecYEG preprotein conducting channel. Has a central role in coupling the hydrolysis of ATP to the transfer of proteins into and across the cell membrane, serving both as a receptor for the preprotein-SecB complex and as an ATP-driven molecular motor driving the stepwise translocation of polypeptide chains across the membrane. The polypeptide is Protein translocase subunit SecA (Ruegeria sp. (strain TM1040) (Silicibacter sp.)).